Reading from the N-terminus, the 612-residue chain is uncharacterized protein (612 aa).

The segment at 213-238 is disordered; the sequence is ASAEDGEEAAAGAGKRQVARSGARKR. The VWFA domain maps to 421-610; that stretch reads DLACLLLADL…ERLLQLYRRL (190 aa).

The protein localises to the cytoplasm. In terms of biological role, component of the anaerobic respiratory chain that transforms nitrate to dinitrogen (denitrification). Function unknown, but essential for the denitrification process. This is an uncharacterized protein from Pseudomonas aeruginosa (strain ATCC 15692 / DSM 22644 / CIP 104116 / JCM 14847 / LMG 12228 / 1C / PRS 101 / PAO1).